The chain runs to 154 residues: UPF0178 protein GDI0551/Gdia_1457 (154 aa).

Belongs to the UPF0178 family.

The sequence is that of UPF0178 protein GDI0551/Gdia_1457 from Gluconacetobacter diazotrophicus (strain ATCC 49037 / DSM 5601 / CCUG 37298 / CIP 103539 / LMG 7603 / PAl5).